A 388-amino-acid polypeptide reads, in one-letter code: tRNA (guanine-N(7)-)-methyltransferase (388 aa).

The S-adenosyl-L-methionine site is built by E129, E154, and D181. Residues K207 and D237 each contribute to the substrate site.

This sequence belongs to the class I-like SAM-binding methyltransferase superfamily. TrmB family.

It catalyses the reaction guanosine(46) in tRNA + S-adenosyl-L-methionine = N(7)-methylguanosine(46) in tRNA + S-adenosyl-L-homocysteine. It participates in tRNA modification; N(7)-methylguanine-tRNA biosynthesis. Its function is as follows. Catalyzes the formation of N(7)-methylguanine at position 46 (m7G46) in tRNA. The chain is tRNA (guanine-N(7)-)-methyltransferase from Wolinella succinogenes (strain ATCC 29543 / DSM 1740 / CCUG 13145 / JCM 31913 / LMG 7466 / NCTC 11488 / FDC 602W) (Vibrio succinogenes).